The primary structure comprises 559 residues: Formate--tetrahydrofolate ligase (559 aa).

66–73 provides a ligand contact to ATP; that stretch reads TPPGEGKT.

The protein belongs to the formate--tetrahydrofolate ligase family.

It catalyses the reaction (6S)-5,6,7,8-tetrahydrofolate + formate + ATP = (6R)-10-formyltetrahydrofolate + ADP + phosphate. It functions in the pathway one-carbon metabolism; tetrahydrofolate interconversion. The chain is Formate--tetrahydrofolate ligase from Nocardioides sp. (strain ATCC BAA-499 / JS614).